Reading from the N-terminus, the 186-residue chain is Ribosome-recycling factor (186 aa).

Belongs to the RRF family.

It is found in the cytoplasm. Responsible for the release of ribosomes from messenger RNA at the termination of protein biosynthesis. May increase the efficiency of translation by recycling ribosomes from one round of translation to another. This is Ribosome-recycling factor from Leptothrix cholodnii (strain ATCC 51168 / LMG 8142 / SP-6) (Leptothrix discophora (strain SP-6)).